Consider the following 733-residue polypeptide: Lanosterol synthase (733 aa).

Residue Thr-2 is modified to N-acetylthreonine. The stretch at 125–166 (REEMVRYLRSVQLPDGGWGLHIEDKSTVFGTALNYVALRILG) is one PFTB 1 repeat. The active-site Proton donor is the Asp-456. PFTB repeat units follow at residues 484–529 (LCDA…MIDY), 561–601 (LNQG…ACMG), and 613–654 (VAQA…HSTC).

This sequence belongs to the terpene cyclase/mutase family. As to quaternary structure, monomer.

Its subcellular location is the endoplasmic reticulum membrane. The catalysed reaction is (S)-2,3-epoxysqualene = lanosterol. The protein operates within terpene metabolism; lanosterol biosynthesis; lanosterol from farnesyl diphosphate: step 3/3. Functionally, key enzyme in the cholesterol biosynthesis pathway. Catalyzes the cyclization of (S)-2,3 oxidosqualene to lanosterol, a reaction that forms the sterol nucleus. Through the production of lanosterol may regulate lens protein aggregation and increase transparency. The polypeptide is Lanosterol synthase (Mus musculus (Mouse)).